A 154-amino-acid chain; its full sequence is Ribosomal RNA large subunit methyltransferase H (154 aa).

S-adenosyl-L-methionine contacts are provided by residues Leu-76, Gly-103, and 122–127 (LSPLTL).

This sequence belongs to the RNA methyltransferase RlmH family. Homodimer.

Its subcellular location is the cytoplasm. It catalyses the reaction pseudouridine(1915) in 23S rRNA + S-adenosyl-L-methionine = N(3)-methylpseudouridine(1915) in 23S rRNA + S-adenosyl-L-homocysteine + H(+). In terms of biological role, specifically methylates the pseudouridine at position 1915 (m3Psi1915) in 23S rRNA. The sequence is that of Ribosomal RNA large subunit methyltransferase H from Wolinella succinogenes (strain ATCC 29543 / DSM 1740 / CCUG 13145 / JCM 31913 / LMG 7466 / NCTC 11488 / FDC 602W) (Vibrio succinogenes).